The chain runs to 152 residues: Endoribonuclease YbeY (152 aa).

Positions 113, 117, and 123 each coordinate Zn(2+).

This sequence belongs to the endoribonuclease YbeY family. Zn(2+) serves as cofactor.

The protein localises to the cytoplasm. In terms of biological role, single strand-specific metallo-endoribonuclease involved in late-stage 70S ribosome quality control and in maturation of the 3' terminus of the 16S rRNA. The polypeptide is Endoribonuclease YbeY (Acidovorax ebreus (strain TPSY) (Diaphorobacter sp. (strain TPSY))).